The following is a 663-amino-acid chain: Probable potassium transport system protein Kup (663 aa).

The interval 1 to 23 (MSDNPSSRAGPEVVPTPPPSPAA) is disordered. 12 helical membrane-spanning segments follow: residues 81–101 (PANVLGVLSLVFWAMTFVVTF), 137–157 (LLIILGLFGAALLYGDGVITP), 173–193 (PALEHWVVPVTVGILALLFFI), 201–221 (VGAVFGPVMLVWFLCIAILGV), 224–244 (ILFDATILQAVLPTHAVAFFA), 248–268 (WHGFLVLGGVVLVITGGEALY), 283–303 (WLLVAMPALMLNYMGQGAILL), 315–335 (LLVPGWALYPMIAVATAAAIV), 373–393 (IYVPEVNALLGAATIALVLGF), 399–419 (LAAAYGIAVTGTMAITTLLFH), 433–453 (AWPLTLLFLLVDLAFFGANIV), and 455–475 (VEEGGWFPLAAAAFVFTLLST).

The protein belongs to the HAK/KUP transporter (TC 2.A.72) family.

It localises to the cell inner membrane. The enzyme catalyses K(+)(in) + H(+)(in) = K(+)(out) + H(+)(out). Its function is as follows. Transport of potassium into the cell. Likely operates as a K(+):H(+) symporter. The polypeptide is Probable potassium transport system protein Kup (Anaeromyxobacter sp. (strain Fw109-5)).